The primary structure comprises 419 residues: Adenylosuccinate synthetase (419 aa).

GTP is bound by residues 15–21 (GDEGKGK) and 43–45 (GHT). The active-site Proton acceptor is the D16. D16 and G43 together coordinate Mg(2+). IMP is bound by residues 16 to 19 (DEGK), 41 to 44 (NAGH), T128, R142, Q223, T238, and R302. The Proton donor role is filled by H44. 298-304 (TTTGRAR) is a substrate binding site. GTP is bound by residues R304, 330-332 (KLD), and 408-410 (STS).

It belongs to the adenylosuccinate synthetase family. As to quaternary structure, homodimer. Requires Mg(2+) as cofactor.

It localises to the cytoplasm. The catalysed reaction is IMP + L-aspartate + GTP = N(6)-(1,2-dicarboxyethyl)-AMP + GDP + phosphate + 2 H(+). It participates in purine metabolism; AMP biosynthesis via de novo pathway; AMP from IMP: step 1/2. In terms of biological role, plays an important role in the de novo pathway of purine nucleotide biosynthesis. Catalyzes the first committed step in the biosynthesis of AMP from IMP. This is Adenylosuccinate synthetase from Sulfurimonas denitrificans (strain ATCC 33889 / DSM 1251) (Thiomicrospira denitrificans (strain ATCC 33889 / DSM 1251)).